The following is a 227-amino-acid chain: MGNCVGRQRRERPAAPGHPRKRAGRNEPLKKERLKWKSDYPMTDGQLRSKRDEFWDTAPAFEGRKEIWDALKAAAYAAEANDHELAQAILDGASITLPHGTLCECYDELGNRYQLPIYCLSPPVNLLLEHTEEESLEPPEPPPSVRREFPLKVRLSTGKDVRLSASLPDTVGQLKRQLHAQEGIEPSWQRWFFSGKLLTDRTRLQETKIQKDFVIQVIINQPPPPQD.

The tract at residues 1–35 is disordered; sequence MGNCVGRQRRERPAAPGHPRKRAGRNEPLKKERLK. The span at 24–35 shows a compositional bias: basic and acidic residues; sequence GRNEPLKKERLK. The Ubiquitin-like domain occupies 149-224; that stretch reads FPLKVRLSTG…IQVIINQPPP (76 aa).

Interacts with UBTD1.

Its function is as follows. May be involved in the regulation of cellular senescence through a positive feedback loop with TP53. Is a TP53 downstream target gene that increases the stability of TP53 protein by promoting the ubiquitination and degradation of MDM2. The chain is Ubiquitin domain-containing protein 1 (UBTD1) from Homo sapiens (Human).